Here is a 146-residue protein sequence, read N- to C-terminus: MORN repeat-containing protein 4 (146 aa).

4 MORN repeats span residues Tyr-16–Thr-38, Tyr-39–Arg-61, Tyr-62–Thr-84, and Phe-85–His-107.

Interacts with MYO3A.

The protein localises to the cytoplasm. Its subcellular location is the cell projection. It localises to the filopodium tip. The protein resides in the stereocilium. Its function is as follows. Plays a role in promoting axonal degeneration following neuronal injury by toxic insult or trauma. The chain is MORN repeat-containing protein 4 (Morn4) from Rattus norvegicus (Rat).